Here is a 147-residue protein sequence, read N- to C-terminus: Hemoglobin subunit epsilon (147 aa).

The Globin domain maps to His3–His147. Phosphoserine occurs at positions 14 and 51. Heme b-binding residues include His64 and His93.

The protein belongs to the globin family. As to quaternary structure, heterotetramer of two alpha chains and two epsilon chains in early embryonic hemoglobin Gower-2; two zeta chains and two epsilon chains in early embryonic hemoglobin Gower-1. In terms of tissue distribution, red blood cells.

The epsilon chain is a beta-type chain of early mammalian embryonic hemoglobin. This is Hemoglobin subunit epsilon (HBE1) from Pan paniscus (Pygmy chimpanzee).